A 145-amino-acid chain; its full sequence is Deoxyuridine 5'-triphosphate nucleotidohydrolase (145 aa).

Substrate is bound by residues 63–65 (RSG), asparagine 76, and 80–82 (TID).

The protein belongs to the dUTPase family. Requires Mg(2+) as cofactor.

It carries out the reaction dUTP + H2O = dUMP + diphosphate + H(+). The protein operates within pyrimidine metabolism; dUMP biosynthesis; dUMP from dCTP (dUTP route): step 2/2. This enzyme is involved in nucleotide metabolism: it produces dUMP, the immediate precursor of thymidine nucleotides and it decreases the intracellular concentration of dUTP so that uracil cannot be incorporated into DNA. The chain is Deoxyuridine 5'-triphosphate nucleotidohydrolase from Chlamydia pneumoniae (Chlamydophila pneumoniae).